The chain runs to 238 residues: Ribosomal RNA small subunit methyltransferase G (238 aa).

Residues Gly-75, Leu-80, 126 to 127 (AE), and Arg-142 contribute to the S-adenosyl-L-methionine site.

The protein belongs to the methyltransferase superfamily. RNA methyltransferase RsmG family.

The protein resides in the cytoplasm. Its function is as follows. Specifically methylates the N7 position of guanine in position 518 of 16S rRNA. The chain is Ribosomal RNA small subunit methyltransferase G from Streptomyces avermitilis (strain ATCC 31267 / DSM 46492 / JCM 5070 / NBRC 14893 / NCIMB 12804 / NRRL 8165 / MA-4680).